An 830-amino-acid chain; its full sequence is DNA gyrase subunit A (830 aa).

The region spanning 34-514 (LPDVRDGLKP…NHSDINMEDL (481 aa)) is the Topo IIA-type catalytic domain. Tyrosine 122 (O-(5'-phospho-DNA)-tyrosine intermediate) is an active-site residue. Residues 541–547 (QRRGGKG) carry the GyrA-box motif.

It belongs to the type II topoisomerase GyrA/ParC subunit family. Heterotetramer, composed of two GyrA and two GyrB chains. In the heterotetramer, GyrA contains the active site tyrosine that forms a transient covalent intermediate with DNA, while GyrB binds cofactors and catalyzes ATP hydrolysis.

Its subcellular location is the cytoplasm. The catalysed reaction is ATP-dependent breakage, passage and rejoining of double-stranded DNA.. A type II topoisomerase that negatively supercoils closed circular double-stranded (ds) DNA in an ATP-dependent manner to modulate DNA topology and maintain chromosomes in an underwound state. Negative supercoiling favors strand separation, and DNA replication, transcription, recombination and repair, all of which involve strand separation. Also able to catalyze the interconversion of other topological isomers of dsDNA rings, including catenanes and knotted rings. Type II topoisomerases break and join 2 DNA strands simultaneously in an ATP-dependent manner. The sequence is that of DNA gyrase subunit A from Buchnera aphidicola subsp. Acyrthosiphon pisum (strain APS) (Acyrthosiphon pisum symbiotic bacterium).